We begin with the raw amino-acid sequence, 128 residues long: Small ribosomal subunit protein uS9 (128 aa).

It belongs to the universal ribosomal protein uS9 family.

The polypeptide is Small ribosomal subunit protein uS9 (Christiangramia forsetii (strain DSM 17595 / CGMCC 1.15422 / KT0803) (Gramella forsetii)).